We begin with the raw amino-acid sequence, 606 residues long: Maternal effect protein oskar (606 aa).

In terms of domain architecture, HTH OST-type spans 152-221 (EYPDIDSEVR…SGKRIFNLKA (70 aa)). Serine 270 and serine 275 each carry phosphoserine. Residues 425–439 (LMGDDFMLYLARMEL) are leucine-zipper.

As to quaternary structure, interacts with smaug (smg). Interacts with yl/yolkless. Begins to accumulate at the posterior pole of the oocyte from stage 8 onwards.

The protein localises to the endosome. In terms of biological role, organizes the germ plasm and directs localization of the posterior determinant nanos. Oskar protein is required to keep nanos (nos) RNA and staufen protein at the posterior pole. The chain is Maternal effect protein oskar (osk) from Drosophila melanogaster (Fruit fly).